Here is a 453-residue protein sequence, read N- to C-terminus: Elongation factor 1-alpha (453 aa).

The 226-residue stretch at 5-230 (KTHINIVVIG…DAIVEPKRPH (226 aa)) folds into the tr-type G domain. Residues 14–21 (GHVDAGKS) are G1. Position 14-21 (14-21 (GHVDAGKS)) interacts with GTP. A G2 region spans residues 70–74 (GITID). Positions 91-94 (DAPG) are G3. Residues 91-95 (DAPGH) and 153-156 (NKMD) each bind GTP. The interval 153–156 (NKMD) is G4. The segment at 194–196 (SGW) is G5.

This sequence belongs to the TRAFAC class translation factor GTPase superfamily. Classic translation factor GTPase family. EF-Tu/EF-1A subfamily. As to quaternary structure, binds to actin.

The protein resides in the cytoplasm. Functionally, this protein promotes the GTP-dependent binding of aminoacyl-tRNA to the A-site of ribosomes during protein biosynthesis. It is also an abundant actin filament bundling protein. This is Elongation factor 1-alpha (eef1a2) from Dictyostelium discoideum (Social amoeba).